The chain runs to 214 residues: A-type ATP synthase subunit D (214 aa).

Belongs to the V-ATPase D subunit family. Has multiple subunits with at least A(3), B(3), C, D, E, F, H, I and proteolipid K(x).

It is found in the cell membrane. Its function is as follows. Component of the A-type ATP synthase that produces ATP from ADP in the presence of a proton gradient across the membrane. The polypeptide is A-type ATP synthase subunit D (Thermococcus kodakarensis (strain ATCC BAA-918 / JCM 12380 / KOD1) (Pyrococcus kodakaraensis (strain KOD1))).